The sequence spans 409 residues: Na(+)-translocating NADH-quinone reductase subunit F (409 aa).

The chain crosses the membrane as a helical span at residues 5–25 (FIFGIGAFTAIVLVLAVVILI). The 2Fe-2S ferredoxin-type domain occupies 34–128 (GDITISINDD…SMDVELPEEV (95 aa)). Residues Cys71, Cys77, Cys80, and Cys112 each coordinate [2Fe-2S] cluster. Residues 131–271 (VKKWECTVIS…SGPFGEFFAK (141 aa)) enclose the FAD-binding FR-type domain.

It belongs to the NqrF family. In terms of assembly, composed of six subunits; NqrA, NqrB, NqrC, NqrD, NqrE and NqrF. It depends on [2Fe-2S] cluster as a cofactor. Requires FAD as cofactor.

It localises to the cell inner membrane. The enzyme catalyses a ubiquinone + n Na(+)(in) + NADH + H(+) = a ubiquinol + n Na(+)(out) + NAD(+). Its function is as follows. NQR complex catalyzes the reduction of ubiquinone-1 to ubiquinol by two successive reactions, coupled with the transport of Na(+) ions from the cytoplasm to the periplasm. The first step is catalyzed by NqrF, which accepts electrons from NADH and reduces ubiquinone-1 to ubisemiquinone by a one-electron transfer pathway. The sequence is that of Na(+)-translocating NADH-quinone reductase subunit F from Actinobacillus succinogenes (strain ATCC 55618 / DSM 22257 / CCUG 43843 / 130Z).